Reading from the N-terminus, the 368-residue chain is Phospho-N-acetylmuramoyl-pentapeptide-transferase (368 aa).

Helical transmembrane passes span 23–43 (YLTF…IFAG), 72–92 (VPTM…FLWA), 98–118 (HVWL…IDDY), 139–159 (VTLG…SVLL), 170–190 (LSVD…TAVS), 201–221 (GLAA…AYLC), 238–258 (AGEV…FLWF), 281–301 (VIAL…VFFV), and 345–365 (KIVI…LMTL).

The protein belongs to the glycosyltransferase 4 family. MraY subfamily. Mg(2+) is required as a cofactor.

The protein resides in the cell inner membrane. It catalyses the reaction UDP-N-acetyl-alpha-D-muramoyl-L-alanyl-gamma-D-glutamyl-meso-2,6-diaminopimeloyl-D-alanyl-D-alanine + di-trans,octa-cis-undecaprenyl phosphate = di-trans,octa-cis-undecaprenyl diphospho-N-acetyl-alpha-D-muramoyl-L-alanyl-D-glutamyl-meso-2,6-diaminopimeloyl-D-alanyl-D-alanine + UMP. The protein operates within cell wall biogenesis; peptidoglycan biosynthesis. Catalyzes the initial step of the lipid cycle reactions in the biosynthesis of the cell wall peptidoglycan: transfers peptidoglycan precursor phospho-MurNAc-pentapeptide from UDP-MurNAc-pentapeptide onto the lipid carrier undecaprenyl phosphate, yielding undecaprenyl-pyrophosphoryl-MurNAc-pentapeptide, known as lipid I. This chain is Phospho-N-acetylmuramoyl-pentapeptide-transferase, found in Chlorobaculum tepidum (strain ATCC 49652 / DSM 12025 / NBRC 103806 / TLS) (Chlorobium tepidum).